We begin with the raw amino-acid sequence, 448 residues long: Phosphoglucosamine mutase (448 aa).

S100 (phosphoserine intermediate) is an active-site residue. Mg(2+)-binding residues include S100, D240, D242, and D244. Residue S100 is modified to Phosphoserine.

The protein belongs to the phosphohexose mutase family. Mg(2+) serves as cofactor. In terms of processing, activated by phosphorylation.

It carries out the reaction alpha-D-glucosamine 1-phosphate = D-glucosamine 6-phosphate. Catalyzes the conversion of glucosamine-6-phosphate to glucosamine-1-phosphate. The protein is Phosphoglucosamine mutase of Clostridium beijerinckii (strain ATCC 51743 / NCIMB 8052) (Clostridium acetobutylicum).